Here is a 354-residue protein sequence, read N- to C-terminus: S-adenosylmethionine:tRNA ribosyltransferase-isomerase (354 aa).

This sequence belongs to the QueA family. As to quaternary structure, monomer.

The protein resides in the cytoplasm. The catalysed reaction is 7-aminomethyl-7-carbaguanosine(34) in tRNA + S-adenosyl-L-methionine = epoxyqueuosine(34) in tRNA + adenine + L-methionine + 2 H(+). The protein operates within tRNA modification; tRNA-queuosine biosynthesis. In terms of biological role, transfers and isomerizes the ribose moiety from AdoMet to the 7-aminomethyl group of 7-deazaguanine (preQ1-tRNA) to give epoxyqueuosine (oQ-tRNA). The sequence is that of S-adenosylmethionine:tRNA ribosyltransferase-isomerase from Salmonella schwarzengrund (strain CVM19633).